The following is a 134-amino-acid chain: Ribosome-binding factor A (134 aa).

The protein belongs to the RbfA family. As to quaternary structure, monomer. Binds 30S ribosomal subunits, but not 50S ribosomal subunits or 70S ribosomes.

The protein resides in the cytoplasm. Its function is as follows. One of several proteins that assist in the late maturation steps of the functional core of the 30S ribosomal subunit. Associates with free 30S ribosomal subunits (but not with 30S subunits that are part of 70S ribosomes or polysomes). Required for efficient processing of 16S rRNA. May interact with the 5'-terminal helix region of 16S rRNA. The protein is Ribosome-binding factor A of Bartonella bacilliformis (strain ATCC 35685 / KC583 / Herrer 020/F12,63).